Reading from the N-terminus, the 546-residue chain is (+)-epi-alpha-bisabolol synthase (546 aa).

Mg(2+) is bound by residues aspartate 297, aspartate 301, aspartate 441, threonine 445, and glutamate 449. Residues 297-301 (DDIYD) carry the DDXXD motif motif.

It belongs to the terpene synthase family. The cofactor is Mg(2+).

The catalysed reaction is (2E,6E)-farnesyl diphosphate + H2O = (+)-epi-alpha-bisabolol + diphosphate. Its pathway is secondary metabolite biosynthesis; terpenoid biosynthesis. Its function is as follows. Sesquiterpene synthase involved in the biosynthesis of (+)-epi-alpha-bisabolol, a precursor of the natural sweetner hernandulcin. This Phyla dulcis (Aztec sweet herb) protein is (+)-epi-alpha-bisabolol synthase.